The following is a 293-amino-acid chain: Biphenyl-2,3-diol 1,2-dioxygenase (293 aa).

2 consecutive VOC domains span residues 5–119 (RLGY…IYYG) and 143–265 (GIGH…FGWG). Fe cation-binding residues include His146, His210, and Glu261.

It belongs to the extradiol ring-cleavage dioxygenase family. As to quaternary structure, homooctamer. Requires Fe(2+) as cofactor.

It catalyses the reaction biphenyl-2,3-diol + O2 = 2-hydroxy-6-oxo-6-phenylhexa-2,4-dienoate + H(+). It participates in xenobiotic degradation; biphenyl degradation; 2-hydroxy-2,4-pentadienoate and benzoate from biphenyl: step 3/4. The polypeptide is Biphenyl-2,3-diol 1,2-dioxygenase (bphC) (Pseudomonas sp. (strain KKS102)).